Here is a 219-residue protein sequence, read N- to C-terminus: Small ribosomal subunit protein uS3 (219 aa).

One can recognise a KH type-2 domain in the interval 38–106 (VRKFVKTKLQ…QVAVNIVEVK (69 aa)).

Belongs to the universal ribosomal protein uS3 family. As to quaternary structure, part of the 30S ribosomal subunit. Forms a tight complex with proteins S10 and S14.

Binds the lower part of the 30S subunit head. Binds mRNA in the 70S ribosome, positioning it for translation. This chain is Small ribosomal subunit protein uS3, found in Desulfitobacterium hafniense (strain DSM 10664 / DCB-2).